The sequence spans 549 residues: CTP synthase (549 aa).

An amidoligase domain region spans residues 1–267 (MTKFVFVTGG…AAQVLSLLNL (267 aa)). Ser-13 contributes to the CTP binding site. Residue Ser-13 participates in UTP binding. ATP contacts are provided by residues 14–19 (SIGKGI) and Asp-71. 2 residues coordinate Mg(2+): Asp-71 and Glu-141. Residues 148–150 (DIE), 188–193 (KTKPTQ), and Lys-224 contribute to the CTP site. UTP is bound by residues 188-193 (KTKPTQ) and Lys-224. Residues 292 to 534 (EIAIVGKYVR…VQAARTHSSD (243 aa)) form the Glutamine amidotransferase type-1 domain. Gly-354 contributes to the L-glutamine binding site. The active-site Nucleophile; for glutamine hydrolysis is Cys-381. L-glutamine contacts are provided by residues 382–385 (LGMQ), Glu-405, and Arg-462. Residues His-507 and Glu-509 contribute to the active site.

This sequence belongs to the CTP synthase family. As to quaternary structure, homotetramer.

The enzyme catalyses UTP + L-glutamine + ATP + H2O = CTP + L-glutamate + ADP + phosphate + 2 H(+). It catalyses the reaction L-glutamine + H2O = L-glutamate + NH4(+). It carries out the reaction UTP + NH4(+) + ATP = CTP + ADP + phosphate + 2 H(+). Its pathway is pyrimidine metabolism; CTP biosynthesis via de novo pathway; CTP from UDP: step 2/2. With respect to regulation, allosterically activated by GTP, when glutamine is the substrate; GTP has no effect on the reaction when ammonia is the substrate. The allosteric effector GTP functions by stabilizing the protein conformation that binds the tetrahedral intermediate(s) formed during glutamine hydrolysis. Inhibited by the product CTP, via allosteric rather than competitive inhibition. Catalyzes the ATP-dependent amination of UTP to CTP with either L-glutamine or ammonia as the source of nitrogen. Regulates intracellular CTP levels through interactions with the four ribonucleotide triphosphates. The sequence is that of CTP synthase from Cyanothece sp. (strain PCC 7425 / ATCC 29141).